Reading from the N-terminus, the 343-residue chain is Probable siderophore transport system permease protein YfhA (343 aa).

The next 9 helical transmembrane spans lie at 15-35, 69-89, 97-117, 130-150, 160-180, 204-224, 249-269, 289-309, and 317-337; these read WIVF…SAGL, ILTA…LQGL, PDII…MMFF, WLPA…YLLA, LVLI…LLMI, QHVK…FVAL, FFLL…AGTI, GALL…ADIV, and VEVP…IYLL.

Belongs to the binding-protein-dependent transport system permease family. FecCD subfamily. As to quaternary structure, the complex is composed of one ATP-binding protein (YusV), two transmembrane proteins (YfiZ and YfhA) and a solute-binding protein (YfiY).

Its subcellular location is the cell membrane. Its function is as follows. Part of the ABC transporter complex YfiYZ/YfhA/YusV involved in import of the iron-hydroxamate siderophores schizokinen, arthrobactin and corprogen. The chain is Probable siderophore transport system permease protein YfhA (yfhA) from Bacillus subtilis (strain 168).